Consider the following 406-residue polypeptide: Fosmidomycin resistance protein (406 aa).

The Periplasmic segment spans residues 1–42 (MAMSEQPQPVAGAAASTTKARTSFGILGAISLSHLLNDMIQS). 2 helical membrane-spanning segments follow: residues 43-63 (LILA…MQIG) and 64-84 (MITL…GYWT). At 85–102 (DKYPMPWSLPIGMCFTLS) the chain is on the periplasmic side. The chain crosses the membrane as a helical span at residues 103-123 (GLVLLALAGSFGAVLLAAALV). At 124-151 (GTGSSVFHPESSRVARMASGGRHGLAQS) the chain is on the cytoplasmic side. The chain crosses the membrane as a helical span at residues 152 to 172 (IFQVGGNFGSSLGPLLAAVII). Residues 173-177 (APYGK) are Periplasmic-facing. A helical membrane pass occupies residues 178–198 (GNVAWFVLAALLAIVVLAQIS). Over 199–225 (RWYSAQHRMNKGKPKATIINPLPRNKV) the chain is Cytoplasmic. A helical transmembrane segment spans residues 226–246 (VLAVSILLILIFSKYFYMASI). Residues 247-266 (SSYYTFYLMQKFGLSIQNAQ) lie on the Periplasmic side of the membrane. Residues 267-287 (LHLFAFLFAVAAGTVIGGPVG) traverse the membrane as a helical segment. The Cytoplasmic portion of the chain corresponds to 288–294 (DKIGRKY). A helical transmembrane segment spans residues 295-315 (VIWGSILGVAPFTLILPYASL). The Periplasmic segment spans residues 316 to 319 (HWTG). A helical transmembrane segment spans residues 320 to 340 (VLTVIIGFILASAFSAILVYA). Over 341–353 (QELLPGRIGMVSG) the chain is Cytoplasmic. A helical transmembrane segment spans residues 354 to 374 (LFFGFAFGMGGLGAAVLGLIA). Over 375 to 378 (DHTS) the chain is Periplasmic. A helical membrane pass occupies residues 379-399 (IELVYKICAFLPLLGMLTIFL). Residues 400–406 (PDNRHKD) are Cytoplasmic-facing.

The protein belongs to the major facilitator superfamily.

The protein localises to the cell inner membrane. Functionally, confers the resistance against fosmidomycin. The protein is Fosmidomycin resistance protein (fsr) of Escherichia coli (strain K12).